The following is a 434-amino-acid chain: Serine hydroxymethyltransferase (434 aa).

Residues L133 and 137-139 each bind (6S)-5,6,7,8-tetrahydrofolate; that span reads GHL. Position 242 is an N6-(pyridoxal phosphate)lysine (K242).

Belongs to the SHMT family. Homodimer. It depends on pyridoxal 5'-phosphate as a cofactor.

It localises to the cytoplasm. The enzyme catalyses (6R)-5,10-methylene-5,6,7,8-tetrahydrofolate + glycine + H2O = (6S)-5,6,7,8-tetrahydrofolate + L-serine. Its pathway is one-carbon metabolism; tetrahydrofolate interconversion. It functions in the pathway amino-acid biosynthesis; glycine biosynthesis; glycine from L-serine: step 1/1. In terms of biological role, catalyzes the reversible interconversion of serine and glycine with tetrahydrofolate (THF) serving as the one-carbon carrier. This reaction serves as the major source of one-carbon groups required for the biosynthesis of purines, thymidylate, methionine, and other important biomolecules. Also exhibits THF-independent aldolase activity toward beta-hydroxyamino acids, producing glycine and aldehydes, via a retro-aldol mechanism. The protein is Serine hydroxymethyltransferase of Methylorubrum extorquens (strain CM4 / NCIMB 13688) (Methylobacterium extorquens).